The following is a 95-amino-acid chain: Aspartyl/glutamyl-tRNA(Asn/Gln) amidotransferase subunit C (95 aa).

The protein belongs to the GatC family. Heterotrimer of A, B and C subunits.

The catalysed reaction is L-glutamyl-tRNA(Gln) + L-glutamine + ATP + H2O = L-glutaminyl-tRNA(Gln) + L-glutamate + ADP + phosphate + H(+). It catalyses the reaction L-aspartyl-tRNA(Asn) + L-glutamine + ATP + H2O = L-asparaginyl-tRNA(Asn) + L-glutamate + ADP + phosphate + 2 H(+). Its function is as follows. Allows the formation of correctly charged Asn-tRNA(Asn) or Gln-tRNA(Gln) through the transamidation of misacylated Asp-tRNA(Asn) or Glu-tRNA(Gln) in organisms which lack either or both of asparaginyl-tRNA or glutaminyl-tRNA synthetases. The reaction takes place in the presence of glutamine and ATP through an activated phospho-Asp-tRNA(Asn) or phospho-Glu-tRNA(Gln). The sequence is that of Aspartyl/glutamyl-tRNA(Asn/Gln) amidotransferase subunit C from Allorhizobium ampelinum (strain ATCC BAA-846 / DSM 112012 / S4) (Agrobacterium vitis (strain S4)).